The chain runs to 317 residues: 17-beta-hydroxysteroid dehydrogenase type 6 (317 aa).

The first 17 residues, 1-17 (MWLYLAVLLGLYYLLRW), serve as a signal peptide directing secretion. Position 33–57 (33–57 (FITGCDSGFGNQLARQLDLRGLRVL)) interacts with NAD(+). Asn-71 and Asn-161 each carry an N-linked (GlcNAc...) asparagine glycan. Ser-164 serves as a coordination point for substrate. The active-site Proton acceptor is the Tyr-176.

This sequence belongs to the short-chain dehydrogenases/reductases (SDR) family.

It localises to the microsome membrane. The protein localises to the endoplasmic reticulum membrane. The catalysed reaction is all-trans-retinol--[retinol-binding protein] + NAD(+) = all-trans-retinal--[retinol-binding protein] + NADH + H(+). It catalyses the reaction all-trans-retinol + NAD(+) = all-trans-retinal + NADH + H(+). The enzyme catalyses androsterone + NAD(+) = 5alpha-androstan-3,17-dione + NADH + H(+). It carries out the reaction testosterone + NAD(+) = androst-4-ene-3,17-dione + NADH + H(+). The catalysed reaction is 5alpha-androstane-3alpha,17beta-diol + NAD(+) = 17beta-hydroxy-5alpha-androstan-3-one + NADH + H(+). It catalyses the reaction 17beta-estradiol + NAD(+) = estrone + NADH + H(+). The enzyme catalyses 17beta-estradiol + NADP(+) = estrone + NADPH + H(+). It carries out the reaction 3alpha-hydroxy-5alpha-pregnan-20-one + NAD(+) = 5alpha-pregnane-3,20-dione + NADH + H(+). The catalysed reaction is 5alpha-androstane-3beta,17beta-diol + NAD(+) = 17beta-hydroxy-5alpha-androstan-3-one + NADH + H(+). It catalyses the reaction 3beta-hydroxy-5alpha-androstan-17-one + NAD(+) = 5alpha-androstan-3,17-dione + NADH + H(+). In terms of biological role, NAD-dependent oxidoreductase with broad substrate specificity that shows both oxidative and reductive activity (in vitro). Has 17-beta-hydroxysteroid dehydrogenase activity towards various steroids (in vitro). Converts 5-alpha-androstan-3-alpha,17-beta-diol to androsterone and estradiol to estrone (in vitro). Has 3-alpha-hydroxysteroid dehydrogenase activity towards androsterone (in vitro). Has retinol dehydrogenase activity towards all-trans-retinol (in vitro). Can convert androsterone to epi-androsterone. Androsterone is first oxidized to 5-alpha-androstane-3,17-dione and then reduced to epi-andosterone. Can act on both C-19 and C-21 3-alpha-hydroxysteroids. This Bos taurus (Bovine) protein is 17-beta-hydroxysteroid dehydrogenase type 6 (HSD17B6).